The primary structure comprises 435 residues: Serine--tRNA ligase (435 aa).

241–243 (TAE) lines the L-serine pocket. 272 to 274 (RSE) provides a ligand contact to ATP. Residue Glu-295 participates in L-serine binding. An ATP-binding site is contributed by 359–362 (EISS). Ser-395 contributes to the L-serine binding site.

Belongs to the class-II aminoacyl-tRNA synthetase family. Type-1 seryl-tRNA synthetase subfamily. In terms of assembly, homodimer. The tRNA molecule binds across the dimer.

The protein localises to the cytoplasm. It carries out the reaction tRNA(Ser) + L-serine + ATP = L-seryl-tRNA(Ser) + AMP + diphosphate + H(+). The catalysed reaction is tRNA(Sec) + L-serine + ATP = L-seryl-tRNA(Sec) + AMP + diphosphate + H(+). The protein operates within aminoacyl-tRNA biosynthesis; selenocysteinyl-tRNA(Sec) biosynthesis; L-seryl-tRNA(Sec) from L-serine and tRNA(Sec): step 1/1. In terms of biological role, catalyzes the attachment of serine to tRNA(Ser). Is also able to aminoacylate tRNA(Sec) with serine, to form the misacylated tRNA L-seryl-tRNA(Sec), which will be further converted into selenocysteinyl-tRNA(Sec). The chain is Serine--tRNA ligase from Actinobacillus pleuropneumoniae serotype 7 (strain AP76).